The following is a 192-amino-acid chain: Molybdenum cofactor cytidylyltransferase (192 aa).

D101 serves as a coordination point for Mg(2+).

In terms of assembly, monomer. Interacts with the Moco-binding chaperone PaoD. The cofactor is Mg(2+). Requires Mn(2+) as cofactor.

It catalyses the reaction Mo-molybdopterin + CTP + H(+) = Mo-molybdopterin cytosine dinucleotide + diphosphate. Transfers a CMP moiety from CTP to Mo-molybdopterin (Mo-MPT) cofactor (Moco or molybdenum cofactor) to form Mo-molybdopterin cytosine dinucleotide (Mo-MCD) cofactor. Is specific for CTP; other nucleotides such as ATP and GTP cannot be utilized. Is also able to convert MPT to MCD in the absence of molybdate, however, with only one catalytic turnover. This Escherichia coli (strain K12) protein is Molybdenum cofactor cytidylyltransferase (mocA).